Reading from the N-terminus, the 420-residue chain is Trophoblast glycoprotein (420 aa).

Residues 1-31 (MPGGCSRGPAAGDGRLRLARLALVLLGWVSS) form the signal peptide. The Extracellular portion of the chain corresponds to 32-355 (SSPTSSASSF…PILPPSLQTS (324 aa)). The region spanning 53–91 (SAQPPLPDQCPALCECSEAARTVKCVNRNLTEVPTDLPA) is the LRRNT domain. Cystine bridges form between C62–C68 and C66–C77. N81 carries N-linked (GlcNAc...) asparagine glycosylation. 7 LRR repeats span residues 92–113 (YVRNLFLTGNQLAVLPAGAFAR), 116–139 (PLAELAALNLSGSRLDEVRAGAFE), 141–163 (LPSLRQLDLSHNPLADLSPFAFS), 172–204 (PSPLVELILNHIVPPEDERQNRSFEGMVVAALL), 209–232 (LQGLRRLELASNHFLYLPRDVLAQ), 233–255 (LPSLRHLDLSNNSLVSLTYVSFR), and 256–275 (NLTHLESLHLEDNALKVLHN). N-linked (GlcNAc...) asparagine glycosylation occurs at N124. N275 carries N-linked (GlcNAc...) asparagine glycosylation. Positions 283–346 (GLPHIRVFLD…LNSADLDCDP (64 aa)) constitute an LRRCT domain. Disulfide bonds link C298–C323 and C300–C344. The chain crosses the membrane as a helical span at residues 356–376 (YVFLGIVLALIGAIFLLVLYL). The Cytoplasmic segment spans residues 377–420 (NRKGIKKWMHNIRDACRDHMEGYHYRYEINADPRLTNLSSNSDV). S418 is subject to Phosphoserine.

Post-translationally, highly glycosylated. In terms of tissue distribution, expressed by all types of trophoblasts as early as 9 weeks of development. Specific for trophoblastic cells except for amniotic epithelium. In adult tissues, the expression is limited to a few epithelial cell types but is found on a variety of carcinoma.

It is found in the cell membrane. Its function is as follows. May function as an inhibitor of Wnt/beta-catenin signaling by indirectly interacting with LRP6 and blocking Wnt3a-dependent LRP6 internalization. The protein is Trophoblast glycoprotein (TPBG) of Homo sapiens (Human).